We begin with the raw amino-acid sequence, 412 residues long: Gamma-glutamyl phosphate reductase (412 aa).

It belongs to the gamma-glutamyl phosphate reductase family.

It localises to the cytoplasm. It carries out the reaction L-glutamate 5-semialdehyde + phosphate + NADP(+) = L-glutamyl 5-phosphate + NADPH + H(+). Its pathway is amino-acid biosynthesis; L-proline biosynthesis; L-glutamate 5-semialdehyde from L-glutamate: step 2/2. In terms of biological role, catalyzes the NADPH-dependent reduction of L-glutamate 5-phosphate into L-glutamate 5-semialdehyde and phosphate. The product spontaneously undergoes cyclization to form 1-pyrroline-5-carboxylate. The sequence is that of Gamma-glutamyl phosphate reductase from Bartonella henselae (strain ATCC 49882 / DSM 28221 / CCUG 30454 / Houston 1) (Rochalimaea henselae).